A 522-amino-acid polypeptide reads, in one-letter code: Probable mannosyltransferase KTR5 (522 aa).

The Cytoplasmic segment spans residues 1 to 16 (MLLIRRTINAFLGCIH). Residues 17-37 (CNLTATCILIAFVITMYVVLV) traverse the membrane as a helical; Signal-anchor for type II membrane protein segment. The stem region stretch occupies residues 38–82 (SEPASVDGTMGNFLPFSKMDLATKRDRPFYSNCVNTQDYLLNPSY). Topologically, residues 38–522 (SEPASVDGTM…REDYLRQFGN (485 aa)) are lumenal. A catalytic region spans residues 83–522 (IKQNASFVML…REDYLRQFGN (440 aa)). An N-linked (GlcNAc...) asparagine glycan is attached at Asn-86. Residue Glu-363 is the Nucleophile of the active site.

Belongs to the glycosyltransferase 15 family.

The protein resides in the membrane. Possible glycosyltransferase that transfers an alpha-D-mannosyl residue from GDP-mannose into lipid-linked oligosaccharide, forming an alpha-(1-&gt;2)-D-mannosyl-D-mannose linkage. In Saccharomyces cerevisiae (strain ATCC 204508 / S288c) (Baker's yeast), this protein is Probable mannosyltransferase KTR5 (KTR5).